A 153-amino-acid chain; its full sequence is MRCPFCGHDDTQVKDSRPTEDNSAIRRRRSCPECGSRFTTFERVQIRDLVVIKKDGGRSPFDRDKVLKSLRIALRKRPVDDEQIERIVNGIHRRLESMGENEVPSKFIGELVMEVLMDLDKVAYVRYASVYRNFREAKDFEDFLGKMVVPRLD.

The tract at residues 1-26 is disordered; that stretch reads MRCPFCGHDDTQVKDSRPTEDNSAIR. A zinc finger spans residues 3–34; that stretch reads CPFCGHDDTQVKDSRPTEDNSAIRRRRSCPEC. Residues 7-24 show a composition bias toward basic and acidic residues; it reads GHDDTQVKDSRPTEDNSA. In terms of domain architecture, ATP-cone spans 49–139; the sequence is LVVIKKDGGR…VYRNFREAKD (91 aa).

This sequence belongs to the NrdR family. Zn(2+) is required as a cofactor.

In terms of biological role, negatively regulates transcription of bacterial ribonucleotide reductase nrd genes and operons by binding to NrdR-boxes. The sequence is that of Transcriptional repressor NrdR 3 from Paramagnetospirillum magneticum (strain ATCC 700264 / AMB-1) (Magnetospirillum magneticum).